Reading from the N-terminus, the 1486-residue chain is Chromosome partition protein MukB (1486 aa).

34 to 41 provides a ligand contact to ATP; that stretch reads GGNGAGKS. Coiled-coil stretches lie at residues 326–418, 444–480, and 509–603; these read LEAD…QYNQ, LETF…QAYQ, and RHLA…RAPV. The flexible hinge stretch occupies residues 666–783; the sequence is PGGSEDQRLN…EVPLFGRAAR (118 aa). Coiled coils occupy residues 835-923, 977-1115, and 1209-1266; these read EAEI…AKLE, EMLS…TAKA, and VEAI…QNVS.

Belongs to the SMC family. MukB subfamily. As to quaternary structure, homodimerization via its hinge domain. Binds to DNA via its C-terminal region. Interacts, and probably forms a ternary complex, with MukE and MukF via its C-terminal region. The complex formation is stimulated by calcium or magnesium. Interacts with tubulin-related protein FtsZ.

It is found in the cytoplasm. The protein localises to the nucleoid. Functionally, plays a central role in chromosome condensation, segregation and cell cycle progression. Functions as a homodimer, which is essential for chromosome partition. Involved in negative DNA supercoiling in vivo, and by this means organize and compact chromosomes. May achieve or facilitate chromosome segregation by condensation DNA from both sides of a centrally located replisome during cell division. The polypeptide is Chromosome partition protein MukB (Escherichia fergusonii (strain ATCC 35469 / DSM 13698 / CCUG 18766 / IAM 14443 / JCM 21226 / LMG 7866 / NBRC 102419 / NCTC 12128 / CDC 0568-73)).